The following is a 481-amino-acid chain: Delta(14)-sterol reductase ERG24B (481 aa).

8 helical membrane-spanning segments follow: residues 11–31 (FGGP…MQVL), 80–100 (LFAY…QIVL), 125–145 (LTGC…WTWI), 149–169 (YIQL…WTYL), 244–264 (TYGF…YYVL), 279–299 (ITSD…VPFL), 313–333 (HLGP…LYIF), and 427–447 (AAPW…FLLI).

Belongs to the ERG4/ERG24 family.

The protein localises to the endoplasmic reticulum membrane. It catalyses the reaction 4,4-dimethyl-5alpha-cholesta-8,24-dien-3beta-ol + NADP(+) = 4,4-dimethyl-5alpha-cholesta-8,14,24-trien-3beta-ol + NADPH + H(+). It functions in the pathway steroid metabolism; ergosterol biosynthesis. Its function is as follows. Delta(14)-sterol reductase; part of the third module of ergosterol biosynthesis pathway that includes the late steps of the pathway. Catalyzes the reduction of the C14=C15 double bond within 4,4,24-trimethyl ergosta-8,14,24(28)-trienolto produce 4,4-dimethylfecosterol. The third module or late pathway involves the ergosterol synthesis itself through consecutive reactions that mainly occur in the endoplasmic reticulum (ER) membrane. Firstly, the squalene synthase ERG9 catalyzes the condensation of 2 farnesyl pyrophosphate moieties to form squalene, which is the precursor of all steroids. Squalene synthase is crucial for balancing the incorporation of farnesyl diphosphate (FPP) into sterol and nonsterol isoprene synthesis. Secondly, squalene is converted into lanosterol by the consecutive action of the squalene epoxidase ERG1 and the lanosterol synthase ERG7. Then, the delta(24)-sterol C-methyltransferase ERG6 methylates lanosterol at C-24 to produce eburicol. Eburicol is the substrate of the sterol 14-alpha demethylase encoded by CYP51A, CYP51B and CYP51C, to yield 4,4,24-trimethyl ergosta-8,14,24(28)-trienol. CYP51B encodes the enzyme primarily responsible for sterol 14-alpha-demethylation, and plays an essential role in ascospore formation. CYP51A encodes an additional sterol 14-alpha-demethylase, induced on ergosterol depletion and responsible for the intrinsic variation in azole sensitivity. The third CYP51 isoform, CYP51C, does not encode a sterol 14-alpha-demethylase, but is required for full virulence on host wheat ears. The C-14 reductase ERG24 then reduces the C14=C15 double bond which leads to 4,4-dimethylfecosterol. A sequence of further demethylations at C-4, involving the C-4 demethylation complex containing the C-4 methylsterol oxidases ERG25, the sterol-4-alpha-carboxylate 3-dehydrogenase ERG26 and the 3-keto-steroid reductase ERG27, leads to the production of fecosterol via 4-methylfecosterol. ERG28 has a role as a scaffold to help anchor ERG25, ERG26 and ERG27 to the endoplasmic reticulum. The C-8 sterol isomerase ERG2 then catalyzes the reaction which results in unsaturation at C-7 in the B ring of sterols and thus converts fecosterol to episterol. The sterol-C5-desaturases ERG3A and ERG3BB then catalyze the introduction of a C-5 double bond in the B ring to produce 5-dehydroepisterol. The C-22 sterol desaturases ERG5A and ERG5B further convert 5-dehydroepisterol into ergosta-5,7,22,24(28)-tetraen-3beta-ol by forming the C-22(23) double bond in the sterol side chain. Finally, ergosta-5,7,22,24(28)-tetraen-3beta-ol is substrate of the C-24(28) sterol reductase ERG4 to produce ergosterol. The sequence is that of Delta(14)-sterol reductase ERG24B from Gibberella zeae (strain ATCC MYA-4620 / CBS 123657 / FGSC 9075 / NRRL 31084 / PH-1) (Wheat head blight fungus).